We begin with the raw amino-acid sequence, 536 residues long: Light-independent protochlorophyllide reductase subunit B (536 aa).

D36 contacts [4Fe-4S] cluster. Catalysis depends on D292, which acts as the Proton donor. 427–428 is a binding site for substrate; that stretch reads GL. Residues 447-489 form a disordered region; the sequence is QSHLGHLGGHQSQTEQQQSQAATNPSTQSNTDSSSEESPLWTP. Over residues 448 to 469 the composition is skewed to low complexity; that stretch reads SHLGHLGGHQSQTEQQQSQAAT. A compositionally biased stretch (polar residues) spans 470 to 483; the sequence is NPSTQSNTDSSSEE.

Belongs to the ChlB/BchB/BchZ family. As to quaternary structure, protochlorophyllide reductase is composed of three subunits; ChlL, ChlN and ChlB. Forms a heterotetramer of two ChlB and two ChlN subunits. Requires [4Fe-4S] cluster as cofactor.

It catalyses the reaction chlorophyllide a + oxidized 2[4Fe-4S]-[ferredoxin] + 2 ADP + 2 phosphate = protochlorophyllide a + reduced 2[4Fe-4S]-[ferredoxin] + 2 ATP + 2 H2O. Its pathway is porphyrin-containing compound metabolism; chlorophyll biosynthesis (light-independent). In terms of biological role, component of the dark-operative protochlorophyllide reductase (DPOR) that uses Mg-ATP and reduced ferredoxin to reduce ring D of protochlorophyllide (Pchlide) to form chlorophyllide a (Chlide). This reaction is light-independent. The NB-protein (ChlN-ChlB) is the catalytic component of the complex. This is Light-independent protochlorophyllide reductase subunit B from Prochlorococcus marinus (strain MIT 9303).